The primary structure comprises 250 residues: Cruxrhodopsin-3 (250 aa).

Residues 1–9 are Extracellular-facing; sequence MPAPEGEAI. Residues 10-27 form a helical membrane-spanning segment; the sequence is WLWLGTAGMFLGMLYFIA. Residues 28–41 are Cytoplasmic-facing; that stretch reads RGWGETDSRRQKFY. The chain crosses the membrane as a helical span at residues 42-60; that stretch reads IATILITAIAFVNYLAMAL. Over 61–77 the chain is Extracellular; sequence GFGLTIVEIAGEQRPIY. Residues 78–94 traverse the membrane as a helical segment; it reads WARYSDWLFTTPLLLYD. Residues 95–105 are Cytoplasmic-facing; sequence LGLLAGADRNT. Residues 106–125 form a helical membrane-spanning segment; the sequence is ISSLVSLDVLMIGTGLVATL. The Extracellular portion of the chain corresponds to 126–138; the sequence is SAGSGVLSAGAER. Residues 139–158 traverse the membrane as a helical segment; sequence LVWWGISTAFLLVLLYFLFS. Over 159–176 the chain is Cytoplasmic; sequence SLSGRVADLPSDTRSTFK. The helical transmembrane segment at 177–195 threads the bilayer; that stretch reads TLRNLVTVVWLVYPVWWLV. The Extracellular segment spans residues 196–207; sequence GTEGIGLVGIGI. Residues 208–227 traverse the membrane as a helical segment; that stretch reads ETAGFMVIDLVAKVGFGIIL. An N6-(retinylidene)lysine modification is found at Lys220. At 228-250 the chain is on the cytoplasmic side; it reads LRSHGVLDGAAETTGAGATATAD.

This sequence belongs to the archaeal/bacterial/fungal opsin family. As to quaternary structure, homotrimer. Binds bacterioruberin in the crevice between neighboring subunits.

It is found in the cell membrane. Light-driven proton pump. This is Cruxrhodopsin-3 (cop3) from Haloarcula vallismortis (Halobacterium vallismortis).